The sequence spans 296 residues: Phosphatidylserine decarboxylase proenzyme (296 aa).

Active-site charge relay system; for autoendoproteolytic cleavage activity residues include D113, H169, and S256. The active-site Schiff-base intermediate with substrate; via pyruvic acid; for decarboxylase activity is the S256. S256 carries the post-translational modification Pyruvic acid (Ser); by autocatalysis.

It belongs to the phosphatidylserine decarboxylase family. PSD-B subfamily. Prokaryotic type II sub-subfamily. Heterodimer of a large membrane-associated beta subunit and a small pyruvoyl-containing alpha subunit. It depends on pyruvate as a cofactor. Is synthesized initially as an inactive proenzyme. Formation of the active enzyme involves a self-maturation process in which the active site pyruvoyl group is generated from an internal serine residue via an autocatalytic post-translational modification. Two non-identical subunits are generated from the proenzyme in this reaction, and the pyruvate is formed at the N-terminus of the alpha chain, which is derived from the carboxyl end of the proenzyme. The autoendoproteolytic cleavage occurs by a canonical serine protease mechanism, in which the side chain hydroxyl group of the serine supplies its oxygen atom to form the C-terminus of the beta chain, while the remainder of the serine residue undergoes an oxidative deamination to produce ammonia and the pyruvoyl prosthetic group on the alpha chain. During this reaction, the Ser that is part of the protease active site of the proenzyme becomes the pyruvoyl prosthetic group, which constitutes an essential element of the active site of the mature decarboxylase.

The protein resides in the cell membrane. The enzyme catalyses a 1,2-diacyl-sn-glycero-3-phospho-L-serine + H(+) = a 1,2-diacyl-sn-glycero-3-phosphoethanolamine + CO2. Its pathway is phospholipid metabolism; phosphatidylethanolamine biosynthesis; phosphatidylethanolamine from CDP-diacylglycerol: step 2/2. Its function is as follows. Catalyzes the formation of phosphatidylethanolamine (PtdEtn) from phosphatidylserine (PtdSer). This chain is Phosphatidylserine decarboxylase proenzyme, found in Clostridium botulinum (strain Eklund 17B / Type B).